Here is a 350-residue protein sequence, read N- to C-terminus: MEDRIVTPLNIRGDAESEYSLRPKSLKEYIGQRKVKEKLKIFIEAAKNRKEALDHVLFYGPPGLGKTTLANIIALEMGGNLKITSGPAIERAGDLAAILTGLDDRDVLFIDEIHRLNRSVEEILYPAMEDYALDIVIGKGASTKSIRLDLPRFTLIGATTRVGLLTAPLRDRFGVLCPMDFYDQEELSEIVVRSCNILKIRIEPEASVEIGKRSRGTPRIANRLLKRVRDYSEVKGNGTIDLKTSKAALELLEVDKEGFDSIDNKILRAIIDNFNGGPVGIETLAYFIGEELDTIEDVYEPYLLQKGFIIRTPRGRIASDSAYKHFNKTRKSSNAYHKNLKQSSLFDGEV.

The segment at 1–182 (MEDRIVTPLN…FGVLCPMDFY (182 aa)) is large ATPase domain (RuvB-L). Residues L21, R22, G63, K66, T67, T68, 129–131 (EDY), R172, Y182, and R219 each bind ATP. T67 is a binding site for Mg(2+). The small ATPAse domain (RuvB-S) stretch occupies residues 183 to 253 (DQEELSEIVV…TSKAALELLE (71 aa)). Residues 256 to 350 (KEGFDSIDNK…KQSSLFDGEV (95 aa)) are head domain (RuvB-H). Residues R311 and R316 each coordinate DNA.

Belongs to the RuvB family. In terms of assembly, homohexamer. Forms an RuvA(8)-RuvB(12)-Holliday junction (HJ) complex. HJ DNA is sandwiched between 2 RuvA tetramers; dsDNA enters through RuvA and exits via RuvB. An RuvB hexamer assembles on each DNA strand where it exits the tetramer. Each RuvB hexamer is contacted by two RuvA subunits (via domain III) on 2 adjacent RuvB subunits; this complex drives branch migration. In the full resolvosome a probable DNA-RuvA(4)-RuvB(12)-RuvC(2) complex forms which resolves the HJ.

Its subcellular location is the cytoplasm. The enzyme catalyses ATP + H2O = ADP + phosphate + H(+). Its function is as follows. The RuvA-RuvB-RuvC complex processes Holliday junction (HJ) DNA during genetic recombination and DNA repair, while the RuvA-RuvB complex plays an important role in the rescue of blocked DNA replication forks via replication fork reversal (RFR). RuvA specifically binds to HJ cruciform DNA, conferring on it an open structure. The RuvB hexamer acts as an ATP-dependent pump, pulling dsDNA into and through the RuvAB complex. RuvB forms 2 homohexamers on either side of HJ DNA bound by 1 or 2 RuvA tetramers; 4 subunits per hexamer contact DNA at a time. Coordinated motions by a converter formed by DNA-disengaged RuvB subunits stimulates ATP hydrolysis and nucleotide exchange. Immobilization of the converter enables RuvB to convert the ATP-contained energy into a lever motion, pulling 2 nucleotides of DNA out of the RuvA tetramer per ATP hydrolyzed, thus driving DNA branch migration. The RuvB motors rotate together with the DNA substrate, which together with the progressing nucleotide cycle form the mechanistic basis for DNA recombination by continuous HJ branch migration. Branch migration allows RuvC to scan DNA until it finds its consensus sequence, where it cleaves and resolves cruciform DNA. The protein is Holliday junction branch migration complex subunit RuvB of Clostridium kluyveri (strain NBRC 12016).